Reading from the N-terminus, the 353-residue chain is Dihydroorotate dehydrogenase (quinone) (353 aa).

Residues 67-71 (AGFDK) and threonine 91 each bind FMN. Lysine 71 contacts substrate. 116–120 (NRMGF) is a substrate binding site. Asparagine 144 and asparagine 177 together coordinate FMN. Asparagine 177 serves as a coordination point for substrate. The Nucleophile role is filled by serine 180. Asparagine 182 lines the substrate pocket. FMN contacts are provided by lysine 213 and threonine 241. Residue 242 to 243 (NT) participates in substrate binding. FMN contacts are provided by residues glycine 265, glycine 294, and 315–316 (YT).

The protein belongs to the dihydroorotate dehydrogenase family. Type 2 subfamily. In terms of assembly, monomer. FMN serves as cofactor.

The protein resides in the cell membrane. The catalysed reaction is (S)-dihydroorotate + a quinone = orotate + a quinol. The protein operates within pyrimidine metabolism; UMP biosynthesis via de novo pathway; orotate from (S)-dihydroorotate (quinone route): step 1/1. Its function is as follows. Catalyzes the conversion of dihydroorotate to orotate with quinone as electron acceptor. This is Dihydroorotate dehydrogenase (quinone) from Mycobacteroides abscessus (strain ATCC 19977 / DSM 44196 / CCUG 20993 / CIP 104536 / JCM 13569 / NCTC 13031 / TMC 1543 / L948) (Mycobacterium abscessus).